Here is a 430-residue protein sequence, read N- to C-terminus: Chromatin assembly factor 1 p55 subunit (430 aa).

Phosphoserine occurs at positions 11 and 100. 6 WD repeats span residues 126–159 (NHEGEVNRARYMPQNACVIATKTPSSDVLVFDYT), 179–210 (GHQKEGYGLSWNPNLNGYLLSASDDHTICLWD), 229–260 (GHTAVVEDVAWHLLHESLFGSVADDQKLMIWD), 275–306 (AHTAEVNCLSFNPYSEFILATGSADKTVALWD), 319–350 (SHKDEIFQVQWSPHNETILASSGTDRRLHVWD), and 376–407 (GHTAKISDFSWNPNEPWIICSVSEDNIMQVWQ).

Belongs to the WD repeat RBAP46/RBAP48/MSI1 family. As to quaternary structure, probably binds directly to helix 1 of the histone fold of histone H4, a region that is not accessible when H4 is in chromatin. Self associates. Associates with chromatin. Component of the CAF-1 complex, composed of Caf1-55, Caf1-105 and Caf1-180; within the CAF-1 complex, Caf1-180 interacts directly with both Caf1-55 and Caf1-105. Component of the NuRD complex, composed of at least Caf1-55, Mi-2, MTA1-like and HDAC1/Rpd3. Within the NuRD complex, Caf1-55 may interact directly with Mi-2, MTA1-like and HDAC1/Rpd3. The NuRD complex may also associate with the methyl-DNA binding protein MBD-like via Caf1-55 and Mi-2. Component of the NURF complex, composed of Caf1-55, E(bx), Nurf-38 and Iswi. Component of the polycomb repressive complex 2 (PRC2, also known as the Esc/E(Z) complex), composed of Caf1-55, esc, E(z), Su(z)12, and possibly pho. PRC2 associates with the accessory components Jarid2 and jing to form the PRC2 Jarid2-jing variant (PRC2.2). PRC2 may also associate with Pcl and HDAC1/Rpd3 during early embryogenesis. Interacts with Rbf and Rbf2. Component of the DREAM complex at least composed of Myb, Caf1-55, mip40, mip120, mip130, E2f2, Dp, Rbf, Rbf2, lin-52, HDAC1/Rpd3 and l(3)mbt.

It is found in the nucleus. Core histone-binding subunit that may target chromatin assembly factors, chromatin remodeling factors and histone deacetylases to their histone substrates in a manner that is regulated by nucleosomal DNA. Component of several complexes which regulate chromatin metabolism. These include the chromatin assembly factor 1 (CAF-1) complex, which is required for chromatin assembly following DNA replication and DNA repair; the nucleosome remodeling and deacetylase complex (the NuRD complex), which promotes transcriptional repression by histone deacetylation and nucleosome remodeling; the nucleosome remodeling factor (NURF) complex, which catalyzes ATP-dependent nucleosome sliding and facilitates transcription of chromatin; and the polycomb group (PcG) repressor complex ESC-E(Z), which promotes repression of homeotic genes during development. Also required for transcriptional repression of E2F target genes by E2f2 and Rbf or Rbf2. In Drosophila melanogaster (Fruit fly), this protein is Chromatin assembly factor 1 p55 subunit.